Consider the following 506-residue polypeptide: GMP synthase [glutamine-hydrolyzing] (506 aa).

One can recognise a Glutamine amidotransferase type-1 domain in the interval 3 to 188 (GFVILDFGSQ…AQGMCKAPAD (186 aa)). Cys80 functions as the Nucleophile in the catalytic mechanism. Catalysis depends on residues His162 and Glu164. Positions 189-381 (WDAPHIKDIL…LGLPKEMLWR (193 aa)) constitute a GMPS ATP-PPase domain. 217-223 (SGGVDST) serves as a coordination point for ATP.

Homodimer.

The catalysed reaction is XMP + L-glutamine + ATP + H2O = GMP + L-glutamate + AMP + diphosphate + 2 H(+). The protein operates within purine metabolism; GMP biosynthesis; GMP from XMP (L-Gln route): step 1/1. Catalyzes the synthesis of GMP from XMP. This Bdellovibrio bacteriovorus (strain ATCC 15356 / DSM 50701 / NCIMB 9529 / HD100) protein is GMP synthase [glutamine-hydrolyzing].